The chain runs to 178 residues: Interleukin-10 (178 aa).

Residues 1-18 form the signal peptide; sequence MPSSALLYCLILLAGVRP. 2 cysteine pairs are disulfide-bonded: cysteine 30–cysteine 126 and cysteine 80–cysteine 132. An N-linked (GlcNAc...) asparagine glycan is attached at asparagine 134.

Belongs to the IL-10 family. In terms of assembly, homodimer. Interacts with IL10RA and IL10RB.

The protein localises to the secreted. Its function is as follows. Major immune regulatory cytokine that acts on many cells of the immune system where it has profound anti-inflammatory functions, limiting excessive tissue disruption caused by inflammation. Mechanistically, IL10 binds to its heterotetrameric receptor comprising IL10RA and IL10RB leading to JAK1 and STAT2-mediated phosphorylation of STAT3. In turn, STAT3 translocates to the nucleus where it drives expression of anti-inflammatory mediators. Targets antigen-presenting cells (APCs) such as macrophages and monocytes and inhibits their release of pro-inflammatory cytokines including granulocyte-macrophage colony-stimulating factor /GM-CSF, granulocyte colony-stimulating factor/G-CSF, IL-1 alpha, IL-1 beta, IL-6, IL-8 and TNF-alpha. Also interferes with antigen presentation by reducing the expression of MHC-class II and co-stimulatory molecules, thereby inhibiting their ability to induce T cell activation. In addition, controls the inflammatory response of macrophages by reprogramming essential metabolic pathways including mTOR signaling. In Meriones unguiculatus (Mongolian jird), this protein is Interleukin-10 (IL10).